The primary structure comprises 400 residues: 3-phenylpropionate/cinnamic acid dioxygenase ferredoxin--NAD(+) reductase component (400 aa).

Position 5–36 (5–36 (TIIIVGGGQAAAMAAASLRQQGFTGELHLFSD)) interacts with FAD. Residue 146–174 (SVVIVGAGTIGLELAASATQRRCKVTVIE) participates in NAD(+) binding.

Belongs to the bacterial ring-hydroxylating dioxygenase ferredoxin reductase family. As to quaternary structure, this dioxygenase system consists of four proteins: the two subunits of the hydroxylase component (HcaE and HcaF), a ferredoxin (HcaC) and a ferredoxin reductase (HcaD). It depends on FAD as a cofactor.

The catalysed reaction is 2 reduced [2Fe-2S]-[ferredoxin] + NAD(+) + H(+) = 2 oxidized [2Fe-2S]-[ferredoxin] + NADH. The protein operates within aromatic compound metabolism; 3-phenylpropanoate degradation. Functionally, part of the multicomponent 3-phenylpropionate dioxygenase, that converts 3-phenylpropionic acid (PP) and cinnamic acid (CI) into 3-phenylpropionate-dihydrodiol (PP-dihydrodiol) and cinnamic acid-dihydrodiol (CI-dihydrodiol), respectively. The polypeptide is 3-phenylpropionate/cinnamic acid dioxygenase ferredoxin--NAD(+) reductase component (Escherichia coli (strain 55989 / EAEC)).